The following is a 364-amino-acid chain: Aminomethyltransferase (364 aa).

Belongs to the GcvT family. The glycine cleavage system is composed of four proteins: P, T, L and H.

It catalyses the reaction N(6)-[(R)-S(8)-aminomethyldihydrolipoyl]-L-lysyl-[protein] + (6S)-5,6,7,8-tetrahydrofolate = N(6)-[(R)-dihydrolipoyl]-L-lysyl-[protein] + (6R)-5,10-methylene-5,6,7,8-tetrahydrofolate + NH4(+). The glycine cleavage system catalyzes the degradation of glycine. The sequence is that of Aminomethyltransferase from Klebsiella pneumoniae subsp. pneumoniae (strain ATCC 700721 / MGH 78578).